The primary structure comprises 101 residues: Trp operon repressor homolog (101 aa).

Residues 59-82 (QREIAQKYGVSIAQITRGSNALKA) mediate DNA binding.

Belongs to the TrpR family. As to quaternary structure, homodimer.

It is found in the cytoplasm. In terms of biological role, this protein is an aporepressor. When complexed with L-tryptophan it binds the operator region of the trp operon and prevents the initiation of transcription. This Chlamydia caviae (strain ATCC VR-813 / DSM 19441 / 03DC25 / GPIC) (Chlamydophila caviae) protein is Trp operon repressor homolog.